An 810-amino-acid polypeptide reads, in one-letter code: DNA gyrase subunit A (810 aa).

The region spanning 36–502 (LPDVRDGLKP…EVLKTSMSDL (467 aa)) is the Topo IIA-type catalytic domain. Tyr-124 acts as the O-(5'-phospho-DNA)-tyrosine intermediate in catalysis. Positions 499–810 (MSDLMQKENI…SLVSVSKFIK (312 aa)) are C-terminal domain. Residues 529 to 535 (QGTGGKG) carry the GyrA-box motif.

Belongs to the type II topoisomerase GyrA/ParC subunit family. Heterotetramer, composed of two GyrA and two GyrB chains. In the heterotetramer, GyrA contains the active site tyrosine that forms a transient covalent intermediate with DNA, while GyrB binds cofactors and catalyzes ATP hydrolysis.

It localises to the cytoplasm. The enzyme catalyses ATP-dependent breakage, passage and rejoining of double-stranded DNA.. Functionally, a type II topoisomerase that negatively supercoils closed circular double-stranded (ds) DNA in an ATP-dependent manner to modulate DNA topology and maintain chromosomes in an underwound state. Negative supercoiling favors strand separation, and DNA replication, transcription, recombination and repair, all of which involve strand separation. Also able to catalyze the interconversion of other topological isomers of dsDNA rings, including catenanes and knotted rings. Type II topoisomerases break and join 2 DNA strands simultaneously in an ATP-dependent manner. In Borreliella burgdorferi (strain ATCC 35210 / DSM 4680 / CIP 102532 / B31) (Borrelia burgdorferi), this protein is DNA gyrase subunit A.